A 635-amino-acid chain; its full sequence is Probable ethylene response sensor 2 (635 aa).

Helical transmembrane passes span 24-44, 59-79, and 94-114; these read ISDF…IYFV, FGAF…TFAI, and ATAV…PDLL. Cu cation is bound by residues C66 and H70. The region spanning 159–308 is the GAF domain; that stretch reads DRHTILRTTL…VVADQVAVAL (150 aa). The 239-residue stretch at 351–589 folds into the Histidine kinase domain; the sequence is VMNHEMRTPM…MFFVKLGMPE (239 aa). Position 354 is a phosphohistidine; by autocatalysis (H354).

This sequence belongs to the ethylene receptor family. As to quaternary structure, homodimer. Cu cation serves as cofactor. Expressed in anthers and hulls.

It is found in the endoplasmic reticulum membrane. The enzyme catalyses ATP + protein L-histidine = ADP + protein N-phospho-L-histidine.. In terms of biological role, ethylene receptor related to bacterial two-component regulators. Acts as a negative regulator of ethylene signaling. May play a role in the regulation of flowering by up-regulating GI (GIGANTEA) and RCN1 and regulate starch accumulation by down-regulating the alpha-amylase AMY3D. The chain is Probable ethylene response sensor 2 from Oryza sativa subsp. indica (Rice).